We begin with the raw amino-acid sequence, 290 residues long: Lipoyl synthase 2 (290 aa).

Residues cysteine 37, cysteine 42, cysteine 48, cysteine 63, cysteine 67, cysteine 70, and serine 283 each contribute to the [4Fe-4S] cluster site. The region spanning tyrosine 49 to serine 272 is the Radical SAM core domain.

This sequence belongs to the radical SAM superfamily. Lipoyl synthase family. The cofactor is [4Fe-4S] cluster.

Its subcellular location is the cytoplasm. The enzyme catalyses [[Fe-S] cluster scaffold protein carrying a second [4Fe-4S](2+) cluster] + N(6)-octanoyl-L-lysyl-[protein] + 2 oxidized [2Fe-2S]-[ferredoxin] + 2 S-adenosyl-L-methionine + 4 H(+) = [[Fe-S] cluster scaffold protein] + N(6)-[(R)-dihydrolipoyl]-L-lysyl-[protein] + 4 Fe(3+) + 2 hydrogen sulfide + 2 5'-deoxyadenosine + 2 L-methionine + 2 reduced [2Fe-2S]-[ferredoxin]. Its pathway is protein modification; protein lipoylation via endogenous pathway; protein N(6)-(lipoyl)lysine from octanoyl-[acyl-carrier-protein]: step 2/2. Functionally, catalyzes the radical-mediated insertion of two sulfur atoms into the C-6 and C-8 positions of the octanoyl moiety bound to the lipoyl domains of lipoate-dependent enzymes, thereby converting the octanoylated domains into lipoylated derivatives. The polypeptide is Lipoyl synthase 2 (Thermosynechococcus vestitus (strain NIES-2133 / IAM M-273 / BP-1)).